The sequence spans 216 residues: ATP phosphoribosyltransferase (216 aa).

The protein belongs to the ATP phosphoribosyltransferase family. Short subfamily. In terms of assembly, heteromultimer composed of HisG and HisZ subunits.

Its subcellular location is the cytoplasm. The catalysed reaction is 1-(5-phospho-beta-D-ribosyl)-ATP + diphosphate = 5-phospho-alpha-D-ribose 1-diphosphate + ATP. It functions in the pathway amino-acid biosynthesis; L-histidine biosynthesis; L-histidine from 5-phospho-alpha-D-ribose 1-diphosphate: step 1/9. In terms of biological role, catalyzes the condensation of ATP and 5-phosphoribose 1-diphosphate to form N'-(5'-phosphoribosyl)-ATP (PR-ATP). Has a crucial role in the pathway because the rate of histidine biosynthesis seems to be controlled primarily by regulation of HisG enzymatic activity. The polypeptide is ATP phosphoribosyltransferase (Thiobacillus denitrificans (strain ATCC 25259 / T1)).